The following is a 243-amino-acid chain: Probable phosphatase CLI_3563 (243 aa).

Positions 8, 10, 16, 41, 74, 102, 132, 192, and 194 each coordinate Zn(2+).

The protein belongs to the PHP family. Zn(2+) is required as a cofactor.

This Clostridium botulinum (strain Langeland / NCTC 10281 / Type F) protein is Probable phosphatase CLI_3563.